The chain runs to 61 residues: Metallothionein-1A (61 aa).

N-acetylmethionine is present on Met1. Positions 1–29 (MDPNCSCATGGSCTCTGSCKCKECKCTSC) are beta. A divalent metal cation is bound by residues Cys5, Cys7, Cys13, Cys15, Cys19, Cys21, Cys24, Cys26, Cys29, Cys33, Cys34, Cys36, Cys37, Cys41, Cys44, Cys48, Cys50, and Cys57. Residues 30-61 (KKSCCSCCPMSCAKCAQGCICKGASEKCSCCA) form an alpha region. Ser58 is subject to Phosphoserine. Cys59 and Cys60 together coordinate a divalent metal cation.

Belongs to the metallothionein superfamily. Type 1 family. In terms of assembly, monomer.

In terms of biological role, metallothioneins have a high content of cysteine residues that bind various heavy metals; these proteins are transcriptionally regulated by both heavy metals and glucocorticoids. In Homo sapiens (Human), this protein is Metallothionein-1A (MT1A).